Here is a 100-residue protein sequence, read N- to C-terminus: Large ribosomal subunit protein bL21 (100 aa).

This sequence belongs to the bacterial ribosomal protein bL21 family. As to quaternary structure, part of the 50S ribosomal subunit. Contacts proteins L15 and L20.

Functionally, binds directly to 23S rRNA, probably serving to organize its structure. The sequence is that of Large ribosomal subunit protein bL21 from Deinococcus radiodurans (strain ATCC 13939 / DSM 20539 / JCM 16871 / CCUG 27074 / LMG 4051 / NBRC 15346 / NCIMB 9279 / VKM B-1422 / R1).